Reading from the N-terminus, the 250-residue chain is uncharacterized protein (250 aa).

Residues 2–22 traverse the membrane as a helical segment; the sequence is ILRIIIFVIIILVVSLLLIYF.

It localises to the membrane. This is an uncharacterized protein from Acanthamoeba polyphaga (Amoeba).